We begin with the raw amino-acid sequence, 573 residues long: (R)-mandelonitrile lyase 3 (573 aa).

The first 27 residues, 1–27, serve as a signal peptide directing secretion; the sequence is MVKSTMSAVLLVLHIFVLHLQYSEVQS. Asparagine 30 carries an N-linked (GlcNAc...) asparagine glycan. Residue 63–64 participates in FAD binding; sequence TA. A glycan (N-linked (GlcNAc...) asparagine) is linked at asparagine 75. FAD contacts are provided by residues 82–83, valine 129, threonine 133, and 137–140; these read ER and NAGV. Residues asparagine 145, asparagine 150, asparagine 162, and asparagine 218 are each glycosylated (N-linked (GlcNAc...) asparagine). Valine 244 is a binding site for FAD. Residues asparagine 252, asparagine 267, and asparagine 309 are each glycosylated (N-linked (GlcNAc...) asparagine). Substrate is bound at residue cysteine 356. 4 N-linked (GlcNAc...) asparagine glycosylation sites follow: asparagine 380, asparagine 402, asparagine 420, and asparagine 467. Cysteines 427 and 478 form a disulfide. Residue tyrosine 485 participates in substrate binding. FAD-binding positions include 486-487 and glycine 515; that span reads WH. Histidine 487 serves as the catalytic Proton donor. Histidine 525 functions as the Proton acceptor in the catalytic mechanism. 526–527 contributes to the FAD binding site; the sequence is PQ.

The protein belongs to the GMC oxidoreductase family. Monomer. Requires FAD as cofactor.

Its subcellular location is the vacuole. The protein resides in the aleurone grain. The catalysed reaction is (R)-mandelonitrile = benzaldehyde + hydrogen cyanide. Involved in cyanogenesis, the release of HCN from injured tissues. Catalyzes the stereospecific addition of HCN to a variety of aldehydes in vitro. It is a major seed constituent, and could have the additional role of a storage form for reduced nitrogen. In Prunus serotina (Black cherry), this protein is (R)-mandelonitrile lyase 3 (MDL3).